The sequence spans 782 residues: Fibrinogen alpha chain (782 aa).

The N-terminal stretch at 1-19 (MLSLRVACLILSLASTVWT) is a signal peptide. A coiled-coil region spans residues 68 to 547 (GCRMKGLIDE…KRGRARTMRD (480 aa)). Residues 264-283 (RPGKDGASRGDLPGDSRGDS) show a composition bias toward basic and acidic residues. The interval 264–374 (RPGKDGASRG…PATRKEYHTG (111 aa)) is disordered. Serine 279 bears the Phosphoserine mark. Positions 311 to 323 (SGSGSDGNWGSGT) are enriched in gly residues. Low complexity-rich tracts occupy residues 324 to 344 (TGSDDTGTWGAGSSRPSSGSG) and 354 to 364 (GEFSEFGGSSS). Serine 326 carries the phosphoserine modification. A disulfide bridge links cysteine 404 with cysteine 434. Residue serine 470 is modified to Phosphoserine. A 4-hydroxyproline; by P4HA1 modification is found at proline 499. Residues 522–536 (DEAASEAHQEGDTRT) are compositionally biased toward basic and acidic residues. Residues 522-542 (DEAASEAHQEGDTRTTKRGRA) are disordered. A Phosphoserine modification is found at serine 526. The region spanning 539 to 780 (RGRARTMRDC…AVRMKIRPLV (242 aa)) is the Fibrinogen C-terminal domain. N-linked (GlcNAc...) asparagine glycosylation occurs at asparagine 602. Residues aspartate 707, aspartate 709, tryptophan 711, and glutamate 713 each coordinate Ca(2+). Residues cysteine 715 and cysteine 728 are joined by a disulfide bond.

As to quaternary structure, heterohexamer; disulfide linked. Contains 2 sets of 3 non-identical chains (alpha, beta and gamma). The 2 heterotrimers are in head to head conformation with the N-termini in a small central domain. Post-translationally, conversion of fibrinogen to fibrin is triggered by thrombin, which cleaves fibrinopeptides A and B from alpha and beta chains, and thus exposes the N-terminal polymerization sites responsible for the formation of the soft clot. The soft clot is converted into the hard clot by factor XIIIA which catalyzes the epsilon-(gamma-glutamyl)lysine cross-linking between gamma chains (stronger) and between alpha chains (weaker) of different monomers. In terms of processing, forms F13A-mediated cross-links between a glutamine and the epsilon-amino group of a lysine residue, forming fibronectin-fibrinogen heteropolymers. Phosphorylated by FAM20C in the extracellular medium.

It is found in the secreted. In terms of biological role, cleaved by the protease thrombin to yield monomers which, together with fibrinogen beta (FGB) and fibrinogen gamma (FGG), polymerize to form an insoluble fibrin matrix. Fibrin has a major function in hemostasis as one of the primary components of blood clots. In addition, functions during the early stages of wound repair to stabilize the lesion and guide cell migration during re-epithelialization. Was originally thought to be essential for platelet aggregation, based on in vitro studies using anticoagulated blood. However, subsequent studies have shown that it is not absolutely required for thrombus formation in vivo. Enhances expression of SELP in activated platelets via an ITGB3-dependent pathway. Maternal fibrinogen is essential for successful pregnancy. Fibrin deposition is also associated with infection, where it protects against IFNG-mediated hemorrhage. May also facilitate the immune response via both innate and T-cell mediated pathways. The protein is Fibrinogen alpha chain (Fga) of Rattus norvegicus (Rat).